The sequence spans 173 residues: Endoribonuclease YbeY (173 aa).

3 residues coordinate Zn(2+): His-120, His-124, and His-130.

The protein belongs to the endoribonuclease YbeY family. The cofactor is Zn(2+).

It localises to the cytoplasm. Its function is as follows. Single strand-specific metallo-endoribonuclease involved in late-stage 70S ribosome quality control and in maturation of the 3' terminus of the 16S rRNA. The chain is Endoribonuclease YbeY from Kineococcus radiotolerans (strain ATCC BAA-149 / DSM 14245 / SRS30216).